We begin with the raw amino-acid sequence, 542 residues long: Chaperonin GroEL (542 aa).

Residues 29–32, 86–90, glycine 413, 476–478, and aspartate 492 contribute to the ATP site; these read TLGP, DGTTT, and NAA.

It belongs to the chaperonin (HSP60) family. In terms of assembly, forms a cylinder of 14 subunits composed of two heptameric rings stacked back-to-back. Interacts with the co-chaperonin GroES.

The protein localises to the cytoplasm. It carries out the reaction ATP + H2O + a folded polypeptide = ADP + phosphate + an unfolded polypeptide.. Functionally, together with its co-chaperonin GroES, plays an essential role in assisting protein folding. The GroEL-GroES system forms a nano-cage that allows encapsulation of the non-native substrate proteins and provides a physical environment optimized to promote and accelerate protein folding. The chain is Chaperonin GroEL from Lactococcus lactis subsp. cremoris (strain MG1363).